The following is a 267-amino-acid chain: NAD kinase 2 (267 aa).

The active-site Proton acceptor is the D52. NAD(+) contacts are provided by residues 52–53, 124–125, R151, D153, 164–169, and A188; these read DA, NE, and TAYNKS.

This sequence belongs to the NAD kinase family. The cofactor is a divalent metal cation.

The protein localises to the cytoplasm. The catalysed reaction is NAD(+) + ATP = ADP + NADP(+) + H(+). Its function is as follows. Involved in the regulation of the intracellular balance of NAD and NADP, and is a key enzyme in the biosynthesis of NADP. Catalyzes specifically the phosphorylation on 2'-hydroxyl of the adenosine moiety of NAD to yield NADP. The protein is NAD kinase 2 of Bacillus cereus (strain ATCC 10987 / NRS 248).